The chain runs to 2009 residues: Sodium channel protein type 1 subunit alpha (2009 aa).

Topologically, residues Met-1 to Ser-128 are cytoplasmic. Basic and acidic residues predominate over residues Arg-28–Gly-48. The disordered stretch occupies residues Arg-28–Asn-60. An I repeat occupies Ile-110–Gln-454. Residues Leu-129 to Thr-146 traverse the membrane as a helical segment. The Extracellular segment spans residues Met-147–Asp-152. Residues Trp-153–Gly-177 traverse the membrane as a helical segment. At Phe-178–Asp-188 the chain is on the cytoplasmic side. The chain crosses the membrane as a helical span at residues Pro-189–Glu-205. The Extracellular segment spans residues Phe-206–Ser-213. Asn-211 is a glycosylation site (N-linked (GlcNAc...) asparagine). A helical transmembrane segment spans residues Ala-214 to Thr-235. The Cytoplasmic segment spans residues Ile-236–Lys-245. A helical membrane pass occupies residues Lys-246–Phe-269. At Met-270–Ser-369 the chain is on the extracellular side. 2 cysteine pairs are disulfide-bonded: Cys-277-Cys-345 and Cys-336-Cys-351. Asn-284, Asn-295, Asn-301, Asn-306, and Asn-338 each carry an N-linked (GlcNAc...) asparagine glycan. Positions Trp-370–Trp-384 form an intramembrane region, pore-forming. Over Glu-385 to Lys-397 the chain is Extracellular. Residues Thr-398–Ala-423 traverse the membrane as a helical segment. The Cytoplasmic segment spans residues Met-424–Pro-768. Residues Ala-458–Ser-528 form a disordered region. A Phosphoserine modification is found at Ser-470. A compositionally biased stretch (low complexity) spans Leu-479–Lys-492. Basic residues predominate over residues Lys-495–Gln-506. The segment covering Lys-507–Ser-528 has biased composition (basic and acidic residues). Phosphoserine occurs at positions 523, 525, 550, 551, 607, and 730. Residues Val-584–Ser-628 are disordered. Basic and acidic residues predominate over residues Asp-593–Ser-607. Residues Cys-750–Gly-1022 form an II repeat. The chain crosses the membrane as a helical span at residues Phe-769–Met-787. Residues Glu-788–Asn-797 are Extracellular-facing. A helical membrane pass occupies residues His-798–Ile-820. Residues Ala-821–Glu-830 lie on the Cytoplasmic side of the membrane. A helical membrane pass occupies residues Gly-831–Leu-849. The Extracellular portion of the chain corresponds to Ala-850 to Gly-854. Residues Leu-855 to Pro-874 form a helical membrane-spanning segment. Residues Thr-875–Gly-891 lie on the Cytoplasmic side of the membrane. The chain crosses the membrane as a helical span at residues Asn-892–Phe-912. Over Gly-913–Phe-938 the chain is Extracellular. Cys-921 and Cys-927 are disulfide-bonded. An intramembrane region (pore-forming) is located at residues His-939–Trp-952. The Extracellular segment spans residues Ile-953–Gln-965. Cys-959 and Cys-968 are oxidised to a cystine. Residues Ala-966–Leu-992 traverse the membrane as a helical segment. At Ser-993 to Asn-1218 the chain is on the cytoplasmic side. The segment at Thr-1129–Ala-1163 is disordered. An III repeat occupies Arg-1200–Leu-1514. A helical transmembrane segment spans residues Trp-1219–Phe-1237. The Extracellular segment spans residues Glu-1238–Thr-1250. A helical transmembrane segment spans residues Met-1251 to Tyr-1276. Residues Gln-1277–Thr-1278 are Cytoplasmic-facing. Residues Tyr-1279–Leu-1304 form a helical membrane-spanning segment. Residues Gly-1305–Lys-1313 lie on the Extracellular side of the membrane. Residues Ser-1314 to Gly-1332 traverse the membrane as a helical segment. Topologically, residues Met-1333–Pro-1345 are cytoplasmic. Residues Ser-1346–Phe-1369 form a helical membrane-spanning segment. The Extracellular portion of the chain corresponds to Ala-1370–Phe-1415. Cys-1376 and Cys-1396 are oxidised to a cystine. N-linked (GlcNAc...) asparagine glycans are attached at residues Asn-1378, Asn-1392, and Asn-1403. An intramembrane region (pore-forming) is located at residues Asp-1416–Gly-1433. Over Trp-1434 to Leu-1457 the chain is Extracellular. A helical membrane pass occupies residues Tyr-1458 to Ile-1483. The Cytoplasmic segment spans residues Asp-1484–Gln-1541. Position 1516 is a phosphoserine; by PKC (Ser-1516). The IV repeat unit spans residues Ile-1523–Gln-1821. The chain crosses the membrane as a helical span at residues Val-1542–Val-1560. Topologically, residues Glu-1561 to Ser-1571 are extracellular. The segment at Glu-1561 to Ser-1571 is S1-S2 loop of repeat IV. The helical transmembrane segment at Ile-1572–Ile-1593 threads the bilayer. Over Ser-1594–Thr-1601 the chain is Cytoplasmic. The helical transmembrane segment at Ile-1602–Glu-1623 threads the bilayer. Residues Met-1619 to Arg-1636 are S3b-S4 loop of repeat IV. The Extracellular segment spans residues Leu-1624 to Arg-1636. A helical transmembrane segment spans residues Val-1637–Gly-1655. Over Ile-1656–Met-1665 the chain is Cytoplasmic. A helical transmembrane segment spans residues Ser-1666 to Gly-1688. Topologically, residues Met-1689 to Gly-1711 are extracellular. The segment at residues Asn-1712–Trp-1726 is an intramembrane region (pore-forming). Topologically, residues Asp-1727–Pro-1759 are extracellular. Cys-1741 and Cys-1756 are disulfide-bonded. The chain crosses the membrane as a helical span at residues Ser-1760–Asn-1788. At Phe-1789–Lys-2009 the chain is on the cytoplasmic side. One can recognise an IQ domain in the interval Glu-1915–Lys-1944. Residues Tyr-1986–Lys-2009 are disordered. Residues Arg-1988–Lys-2009 are compositionally biased toward basic and acidic residues.

This sequence belongs to the sodium channel (TC 1.A.1.10) family. Nav1.1/SCN1A subfamily. The Nav1.1 voltage-gated sodium channel consists of an ion-conducting alpha subunit SCN1A which is functional on its own regulated by one or more beta-1 (SCN1B), beta-2 (SCN2B), beta-3 (SCN3B) and beta-4 (SCN4B) subunits. SCN1B and SCN3B are non-covalently associated with SCN1A. SCN2B and SCN4B are disulfide-linked to SCN1A. SCN1B regulates both the expression at the plasma membrane and the voltage dependence of Nav1.1 inactivation. SCN3B and SCN4B reduce Nav1.1 conductance. Probably interacts with TMEM233; modulates the gating properties of NaV1.1. Interacts with FGF13; regulates the steady-state inactivation of Nav.1.1. Phosphorylation at Ser-1516 by PKC in a highly conserved cytoplasmic loop slows inactivation of the sodium channel and reduces peak sodium currents.

Its subcellular location is the cell membrane. The enzyme catalyses Na(+)(in) = Na(+)(out). With respect to regulation, activated by the spider toxins Hm1a and Hm1b (H.maculata, AC P60992 and AC P0DOC5) eliciting acute pain and mechanical allodynia. Inhibited by the conotoxin GVIIJ. Its function is as follows. Pore-forming subunit of Nav1.1, a voltage-gated sodium (Nav) channel that directly mediates the depolarizing phase of action potentials in excitable membranes. Navs, also called VGSCs (voltage-gated sodium channels) or VDSCs (voltage-dependent sodium channels), operate by switching between closed and open conformations depending on the voltage difference across the membrane. In the open conformation they allow Na(+) ions to selectively pass through the pore, along their electrochemical gradient. The influx of Na(+) ions provokes membrane depolarization, initiating the propagation of electrical signals throughout cells and tissues. By regulating the excitability of neurons, ensures that they respond appropriately to synaptic inputs, maintaining the balance between excitation and inhibition in brain neural circuits. Nav1.1 plays a role in controlling the excitability and action potential propagation from somatosensory neurons, thereby contributing to the sensory perception of mechanically-induced pain. The protein is Sodium channel protein type 1 subunit alpha of Rattus norvegicus (Rat).